The chain runs to 218 residues: CTD kinase subunit gamma (218 aa).

The region spanning 2–138 (DPFEGRMTFL…DAMATVEAHE (137 aa)) is the CID domain. Residues 137 to 157 (HEQASKSGDTSTSGAISKNDI) form a disordered region. Over residues 141 to 152 (SKSGDTSTSGAI) the composition is skewed to polar residues.

It belongs to the CTK3 family. In terms of assembly, CTDK-I consists of three subunits, ctk1/lsk1, ctk2/lsc1 and ctk3 (also called alpha, beta and gamma).

It is found in the cytoplasm. The protein localises to the nucleus. Functionally, subunit of the CTDK-I complex, which hyperphosphorylates the C-terminal heptapeptide repeat domain (CTD) of the largest RNA polymerase II subunit. As part of the CTDK-I complex, involved in RNA polymerase II transcriptional elongation and pre-mRNA 3'-end processing. Together with ctk2, required for ctk1/lsk1 CTD kinase activation. This chain is CTD kinase subunit gamma, found in Schizosaccharomyces pombe (strain 972 / ATCC 24843) (Fission yeast).